The sequence spans 858 residues: Phospholipase D gamma 1 (858 aa).

The 137-residue stretch at 27-163 (PFATSSGSLR…CSGNRIEGLF (137 aa)) folds into the C2 domain. Residue Asp-225 participates in Ca(2+) binding. The region spanning 364–399 (TIYTHHQKTVIVDAEAAQNRRKIVAFVGGLDLCNGR) is the PLD phosphodiesterase 1 domain. Active-site residues include His-369, Lys-371, and Asp-376. His-369 contacts a 1,2-diacyl-sn-glycero-3-phosphate. Ca(2+) contacts are provided by His-405 and His-437. Position 565 (Gln-565) interacts with a 1,2-diacyl-sn-glycero-3-phosphate. The residue at position 680 (Ser-680) is a Phosphoserine. Positions 704-731 (FMIYVHSKGMVVDDEFVLIGSANINQRS) constitute a PLD phosphodiesterase 2 domain. Residues His-709, Lys-711, and Asp-716 contribute to the active site. Residue His-709 participates in a 1,2-diacyl-sn-glycero-3-phosphate binding. Glu-772 lines the Ca(2+) pocket.

It belongs to the phospholipase D family. C2-PLD subfamily. It depends on Ca(2+) as a cofactor. As to expression, highly expressed in roots and flowers, moderately in stems, leaves and seedlings and low in siliques. Not detected in seeds.

Its subcellular location is the cytoplasm. It localises to the membrane. The catalysed reaction is a 1,2-diacyl-sn-glycero-3-phosphocholine + H2O = a 1,2-diacyl-sn-glycero-3-phosphate + choline + H(+). Inhibited by neomycin. Up-regulated by PIP2 binding. Hydrolyzes glycerol-phospholipids at the terminal phosphodiesteric bond to generate phosphatidic acids (PA). Plays an important role in various cellular processes, including phytohormone action, vesicular trafficking, secretion, cytoskeletal arrangement, meiosis, tumor promotion, pathogenesis, membrane deterioration and senescence. Can use phosphatidylserine (PS) and phosphatidylethanolamine (PE) as substrates only in the presence of PIP2. Can use phosphatidylcholine (PC), phosphatidylglycerol (PG) or N-acylphosphatidylethanolamine (NAPE) as substrates in the presence of PE and PIP2. Involved in membrane lipid modulation under aluminum (Al) stress and negatively modulate plant tolerance to Al. The chain is Phospholipase D gamma 1 from Arabidopsis thaliana (Mouse-ear cress).